Here is a 471-residue protein sequence, read N- to C-terminus: 8-amino-7-oxononanoate synthase (471 aa).

Arg-40 lines the substrate pocket. Residue 131 to 132 (GY) coordinates pyridoxal 5'-phosphate. His-156 provides a ligand contact to substrate. 3 residues coordinate pyridoxal 5'-phosphate: Ser-202, His-230, and Thr-258. Position 261 is an N6-(pyridoxal phosphate)lysine (Lys-261). Thr-377 contacts substrate. Positions 409–471 (SEGQTRREAE…LGAARRETAA (63 aa)) are disordered.

It belongs to the class-II pyridoxal-phosphate-dependent aminotransferase family. BioF subfamily. Homodimer. Pyridoxal 5'-phosphate is required as a cofactor.

It carries out the reaction 6-carboxyhexanoyl-[ACP] + L-alanine + H(+) = (8S)-8-amino-7-oxononanoate + holo-[ACP] + CO2. It functions in the pathway cofactor biosynthesis; biotin biosynthesis. In terms of biological role, catalyzes the decarboxylative condensation of pimeloyl-[acyl-carrier protein] and L-alanine to produce 8-amino-7-oxononanoate (AON), [acyl-carrier protein], and carbon dioxide. In Burkholderia ambifaria (strain ATCC BAA-244 / DSM 16087 / CCUG 44356 / LMG 19182 / AMMD) (Burkholderia cepacia (strain AMMD)), this protein is 8-amino-7-oxononanoate synthase.